The primary structure comprises 264 residues: tRNA pseudouridine synthase A (264 aa).

Catalysis depends on aspartate 56, which acts as the Nucleophile. Substrate is bound at residue tyrosine 114.

It belongs to the tRNA pseudouridine synthase TruA family. In terms of assembly, homodimer.

The enzyme catalyses uridine(38/39/40) in tRNA = pseudouridine(38/39/40) in tRNA. Formation of pseudouridine at positions 38, 39 and 40 in the anticodon stem and loop of transfer RNAs. The sequence is that of tRNA pseudouridine synthase A from Buchnera aphidicola subsp. Baizongia pistaciae (strain Bp).